The sequence spans 690 residues: uncharacterized protein (690 aa).

It to M.genitalium MG366 and M.pneumoniae MPN544.

This is an uncharacterized protein from Ureaplasma parvum serovar 3 (strain ATCC 700970).